The sequence spans 498 residues: Dynein regulatory complex subunit 2 (498 aa).

3 coiled-coil regions span residues 98-160 (VIKS…RKTI), 250-311 (KDEK…KAQR), and 417-441 (SLRH…QYLD).

It belongs to the DRC2 family. Component of the nexin-dynein regulatory complex (N-DRC). Interacts with DRC1.

The protein localises to the cytoplasm. Its subcellular location is the cytoskeleton. It localises to the flagellum basal body. It is found in the cell projection. The protein resides in the cilium. The protein localises to the flagellum. Its subcellular location is the flagellum axoneme. Its function is as follows. Component of the nexin-dynein regulatory complex (N-DRC), a key regulator of ciliary/flagellar motility which maintains the alignment and integrity of the distal axoneme and regulates microtubule sliding in motile axonemes. Plays a critical role in the assembly of N-DRC and also stabilizes the assembly of multiple inner dynein arms and radial spokes. Coassembles with DRC1 to form a central scaffold needed for assembly of the N-DRC and its attachment to the outer doublet microtubules. In Bos taurus (Bovine), this protein is Dynein regulatory complex subunit 2 (CCDC65).